Reading from the N-terminus, the 168-residue chain is Large ribosomal subunit protein uL5 (168 aa).

This sequence belongs to the universal ribosomal protein uL5 family. As to quaternary structure, part of the 50S ribosomal subunit; contacts the 5S rRNA and probably tRNA. Forms a bridge to the 30S subunit in the 70S ribosome.

This is one of the proteins that bind and probably mediate the attachment of the 5S RNA into the large ribosomal subunit, where it forms part of the central protuberance. In the 70S ribosome it contacts protein S13 of the 30S subunit (bridge B1b), connecting the 2 subunits; this bridge is implicated in subunit movement. May contact the P site tRNA; the 5S rRNA and some of its associated proteins might help stabilize positioning of ribosome-bound tRNAs. The polypeptide is Large ribosomal subunit protein uL5 (Methanospirillum hungatei JF-1 (strain ATCC 27890 / DSM 864 / NBRC 100397 / JF-1)).